Here is a 211-residue protein sequence, read N- to C-terminus: MEQRLLNANERSTYGKNAAVKMRKAGRIPAVMYDRHGKSVPIDVDEREFMKLFKLVTESTIVTLNAAGKDYEVFIKDFQHDIVSDKIKHIDFYEVERGKTLRTKVKIRLEGSPEGVRHGGILETGITELELECLPKDLPARIIVDVSALDVNQSLHVRDIKLPEAVTVLTSDDITVAAIKFAAAESTTPAATEGEETEAAAAAPEPAAEDK.

A disordered region spans residues 185 to 211 (ESTTPAATEGEETEAAAAAPEPAAEDK). Residues 199 to 211 (AAAAAPEPAAEDK) show a composition bias toward low complexity.

This sequence belongs to the bacterial ribosomal protein bL25 family. CTC subfamily. In terms of assembly, part of the 50S ribosomal subunit; part of the 5S rRNA/L5/L18/L25 subcomplex. Contacts the 5S rRNA. Binds to the 5S rRNA independently of L5 and L18.

Its function is as follows. This is one of the proteins that binds to the 5S RNA in the ribosome where it forms part of the central protuberance. This Treponema denticola (strain ATCC 35405 / DSM 14222 / CIP 103919 / JCM 8153 / KCTC 15104) protein is Large ribosomal subunit protein bL25.